Consider the following 115-residue polypeptide: Large ribosomal subunit protein bL19 (115 aa).

This sequence belongs to the bacterial ribosomal protein bL19 family.

Functionally, this protein is located at the 30S-50S ribosomal subunit interface and may play a role in the structure and function of the aminoacyl-tRNA binding site. This is Large ribosomal subunit protein bL19 from Pectobacterium carotovorum subsp. carotovorum (strain PC1).